The primary structure comprises 95 residues: Co-chaperonin GroES (95 aa).

The protein belongs to the GroES chaperonin family. In terms of assembly, heptamer of 7 subunits arranged in a ring. Interacts with the chaperonin GroEL.

It localises to the cytoplasm. Its function is as follows. Together with the chaperonin GroEL, plays an essential role in assisting protein folding. The GroEL-GroES system forms a nano-cage that allows encapsulation of the non-native substrate proteins and provides a physical environment optimized to promote and accelerate protein folding. GroES binds to the apical surface of the GroEL ring, thereby capping the opening of the GroEL channel. The polypeptide is Co-chaperonin GroES (Cereibacter sphaeroides (strain KD131 / KCTC 12085) (Rhodobacter sphaeroides)).